The sequence spans 155 residues: Cyanate hydratase (155 aa).

Residues arginine 95, glutamate 98, and serine 121 contribute to the active site.

It belongs to the cyanase family.

It catalyses the reaction cyanate + hydrogencarbonate + 3 H(+) = NH4(+) + 2 CO2. Its function is as follows. Catalyzes the reaction of cyanate with bicarbonate to produce ammonia and carbon dioxide. This is Cyanate hydratase from Pseudomonas savastanoi pv. phaseolicola (strain 1448A / Race 6) (Pseudomonas syringae pv. phaseolicola (strain 1448A / Race 6)).